The following is a 437-amino-acid chain: Glutamate-1-semialdehyde 2,1-aminomutase (437 aa).

Lys-279 carries the N6-(pyridoxal phosphate)lysine modification.

This sequence belongs to the class-III pyridoxal-phosphate-dependent aminotransferase family. HemL subfamily. In terms of assembly, homodimer. It depends on pyridoxal 5'-phosphate as a cofactor.

Its subcellular location is the cytoplasm. It catalyses the reaction (S)-4-amino-5-oxopentanoate = 5-aminolevulinate. It participates in porphyrin-containing compound metabolism; protoporphyrin-IX biosynthesis; 5-aminolevulinate from L-glutamyl-tRNA(Glu): step 2/2. The polypeptide is Glutamate-1-semialdehyde 2,1-aminomutase (Sorangium cellulosum (strain So ce56) (Polyangium cellulosum (strain So ce56))).